Here is a 253-residue protein sequence, read N- to C-terminus: Pimeloyl-[acyl-carrier protein] methyl ester esterase (253 aa).

Residues W18, 78-79, and 139-143 contribute to the substrate site; these read SL and FLALD. S78 (nucleophile) is an active-site residue. Catalysis depends on residues D203 and H231. H231 serves as a coordination point for substrate.

It belongs to the AB hydrolase superfamily. Carboxylesterase BioH family. Monomer.

It localises to the cytoplasm. The catalysed reaction is 6-carboxyhexanoyl-[ACP] methyl ester + H2O = 6-carboxyhexanoyl-[ACP] + methanol + H(+). Its pathway is cofactor biosynthesis; biotin biosynthesis. Functionally, the physiological role of BioH is to remove the methyl group introduced by BioC when the pimeloyl moiety is complete. It allows to synthesize pimeloyl-ACP via the fatty acid synthetic pathway through the hydrolysis of the ester bonds of pimeloyl-ACP esters. This Xanthomonas axonopodis pv. citri (strain 306) protein is Pimeloyl-[acyl-carrier protein] methyl ester esterase.